A 115-amino-acid polypeptide reads, in one-letter code: MNLIQSLEQEQIKKELPSFRPGDTIKVNYKVIEGNRERIQAFEGVVIRRRGGGLSETFTVRRISYGVGVERTFPLHAPKIDSIEVVRRGKVRRARLYYLRALRGKKARIKELSTR.

It belongs to the bacterial ribosomal protein bL19 family.

Functionally, this protein is located at the 30S-50S ribosomal subunit interface and may play a role in the structure and function of the aminoacyl-tRNA binding site. The sequence is that of Large ribosomal subunit protein bL19 from Desulforamulus reducens (strain ATCC BAA-1160 / DSM 100696 / MI-1) (Desulfotomaculum reducens).